A 464-amino-acid polypeptide reads, in one-letter code: DNA primase DnaG (464 aa).

In terms of domain architecture, Toprim spans Asp-200–Glu-274. The Mg(2+) site is built by Glu-206, Asp-248, and Asp-250. The segment covering Asn-322–Lys-332 has biased composition (basic and acidic residues). Residues Asn-322–Ile-359 form a disordered region. A compositionally biased stretch (pro residues) spans Pro-333–Lys-345. A compositionally biased stretch (basic and acidic residues) spans Pro-346 to Ile-359.

It belongs to the archaeal DnaG primase family. In terms of assembly, forms a ternary complex with MCM helicase and DNA. Component of the archaeal exosome complex. Mg(2+) is required as a cofactor.

The catalysed reaction is ssDNA + n NTP = ssDNA/pppN(pN)n-1 hybrid + (n-1) diphosphate.. Its function is as follows. RNA polymerase that catalyzes the synthesis of short RNA molecules used as primers for DNA polymerase during DNA replication. Also part of the exosome, which is a complex involved in RNA degradation. Acts as a poly(A)-binding protein that enhances the interaction between heteromeric, adenine-rich transcripts and the exosome. In Thermococcus onnurineus (strain NA1), this protein is DNA primase DnaG.